Reading from the N-terminus, the 301-residue chain is Aldose reductase (301 aa).

11-20 (GKEIPTVGLG) contributes to the NADP(+) binding site. Residue Tyr-51 is the Proton donor of the active site. His-111 contacts substrate. 209–266 (SSLGSAPGSSAKVRDDKTIKAIAKKYGCAPSQIILSYITAQGICVIPKSRSKEHLREN) is an NADP(+) binding site.

It belongs to the aldo/keto reductase family.

The protein resides in the cytoplasm. It catalyses the reaction an alditol + NAD(+) = an aldose + NADH + H(+). The catalysed reaction is an alditol + NADP(+) = an aldose + NADPH + H(+). Functionally, catalyzes the NADPH-dependent reduction of a wide variety of carbonyl-containing compounds to their corresponding alcohols with a broad range of catalytic efficiencies. The sequence is that of Aldose reductase from Encephalitozoon cuniculi (strain GB-M1) (Microsporidian parasite).